The sequence spans 974 residues: Probable proton ATPase 1A (974 aa).

Residues M1 to A23 show a composition bias toward basic and acidic residues. The tract at residues M1–G61 is disordered. The Cytoplasmic portion of the chain corresponds to M1 to R92. The helical transmembrane segment at G93 to L112 threads the bilayer. Residues E113–D117 lie on the Extracellular side of the membrane. The helical transmembrane segment at G118–I137 threads the bilayer. At K138–R264 the chain is on the cytoplasmic side. Residues V265 to A286 traverse the membrane as a helical segment. At R287–H294 the chain is on the extracellular side. The chain crosses the membrane as a helical span at residues A295–V321. Topologically, residues G322–R630 are cytoplasmic. D351 (4-aspartylphosphate intermediate) is an active-site residue. Mg(2+)-binding residues include D605 and D609. Residues A631–V651 traverse the membrane as a helical segment. The Extracellular portion of the chain corresponds to S652–S661. A helical membrane pass occupies residues F662–L684. The Cytoplasmic portion of the chain corresponds to T685–Q697. A helical membrane pass occupies residues F698–L712. Over N713–P737 the chain is Extracellular. Position 714 (D714) interacts with Mg(2+). The helical transmembrane segment at V738–G761 threads the bilayer. Residues L762–H812 are Cytoplasmic-facing. The helical transmembrane segment at F813 to F840 threads the bilayer. The Extracellular portion of the chain corresponds to W841–W868. The helical transmembrane segment at V869 to A887 threads the bilayer. Residues H888 to K974 lie on the Cytoplasmic side of the membrane. A compositionally biased stretch (basic and acidic residues) spans G950–I959. The segment at G950–K974 is disordered.

The protein belongs to the cation transport ATPase (P-type) (TC 3.A.3) family. Type IIIA subfamily.

The protein localises to the membrane. It carries out the reaction ATP + H2O + H(+)(in) = ADP + phosphate + 2 H(+)(out). The protein is Probable proton ATPase 1A (H1A) of Leishmania donovani.